A 224-amino-acid polypeptide reads, in one-letter code: CDP-diacylglycerol--inositol 3-phosphatidyltransferase (224 aa).

Topologically, residues 1–8 are cytoplasmic; sequence MTIAEHDN. Residues 9 to 29 form a helical membrane-spanning segment; the sequence is VFIFVPNLIGYARIVLALIAF. Residues 30–35 lie on the Lumenal side of the membrane; sequence WFMSTN. The chain crosses the membrane as a helical span at residues 36–52; it reads YVISGWCYVTSALLDAV. The Mg(2+) site is built by aspartate 50 and aspartate 53. The Cytoplasmic portion of the chain corresponds to 53 to 76; sequence DGQAARAFNQSTRFGAMLDQLTDR. A CDP-1,2-diacyl-sn-glycerol is bound by residues glycine 54, arginine 58, and threonine 64. Mg(2+) is bound by residues aspartate 71 and aspartate 75. The Proton acceptor role is filled by aspartate 75. A helical transmembrane segment spans residues 77-97; it reads CGTTGLLVTLAYFYPRYMFWF. Residue glutamine 98 is a topological domain, lumenal. Residues 99-119 traverse the membrane as a helical segment; the sequence is LSIAIDVACHWLFMQTSVVVG. At 120 to 138 the chain is on the cytoplasmic side; it reads RSSHKVNDNFIMRLYYQKD. Residues 139 to 159 form a helical membrane-spanning segment; sequence ILTFMCCVNELFYVCLYLLHF. At 160–163 the chain is on the lumenal side; sequence TYGP. Residues 164–184 traverse the membrane as a helical segment; that stretch reads LIFGASLFKILAFLTGPFAVL. At 185-224 the chain is on the cytoplasmic side; sequence KALISVMHAYVAGIDLAAVDVRERQERRQKSEPVSGKKVE.

The protein belongs to the CDP-alcohol phosphatidyltransferase class-I family. Mn(2+) serves as cofactor. Requires Mg(2+) as cofactor. In adults, expression is higher in the head than in the body (at protein level).

The protein localises to the apical cell membrane. The protein resides in the lateral cell membrane. The enzyme catalyses a CDP-1,2-diacyl-sn-glycerol + myo-inositol = a 1,2-diacyl-sn-glycero-3-phospho-(1D-myo-inositol) + CMP + H(+). In terms of biological role, catalyzes the biosynthesis of phosphatidylinositol (PtdIns) as well as PtdIns:inositol exchange reaction. May thus act to reduce an excessive cellular PtdIns content. The exchange activity is due to the reverse reaction of PtdIns synthase and is dependent on CMP, which is tightly bound to the enzyme. Required for the regeneration of the signaling molecule phosphatidylinositol 4,5-bisphosphate (PtdInsP2) from phosphatidic acid (PA) and maintenance of its steady supply during signaling, thus playing an essential role during phospholipase C-mediated transduction. This function is essential in photoreceptors for light-activated recycling of PtdInsP2 during phototransduction. As a key enzyme of the phosphoinositide pathway, indirectly involved in the polarized secretion of basal membrane (BM) proteins in follicle epithelial (FE) cells through promoting PtdInsP2 synthesis in the apical and lateral plasma membranes of FE cells. PtdInsP2 controls the localization of Crag and perhaps the localization and expression of strat, both of which are essential for restricting the secretion of BM proteins to the basal surface. The sequence is that of CDP-diacylglycerol--inositol 3-phosphatidyltransferase from Drosophila melanogaster (Fruit fly).